The sequence spans 893 residues: DNA mismatch repair protein MutS (893 aa).

638–645 (GPNMAGKS) serves as a coordination point for ATP.

It belongs to the DNA mismatch repair MutS family.

Functionally, this protein is involved in the repair of mismatches in DNA. It is possible that it carries out the mismatch recognition step. This protein has a weak ATPase activity. This chain is DNA mismatch repair protein MutS, found in Lawsonia intracellularis (strain PHE/MN1-00).